The primary structure comprises 565 residues: Urocanate hydratase (565 aa).

NAD(+) is bound by residues 61–62 (GG), Q139, 185–187 (GMG), E205, R210, 251–252 (NA), 272–276 (QTSAH), 282–283 (YL), and Y331. The active site involves C419. The disordered stretch occupies residues 453–472 (LDSGSVASPNRETESMRDGS). A compositionally biased stretch (basic and acidic residues) spans 463 to 472 (RETESMRDGS). An NAD(+)-binding site is contributed by G501.

It belongs to the urocanase family. NAD(+) is required as a cofactor.

The protein localises to the cytoplasm. The enzyme catalyses 4-imidazolone-5-propanoate = trans-urocanate + H2O. Its pathway is amino-acid degradation; L-histidine degradation into L-glutamate; N-formimidoyl-L-glutamate from L-histidine: step 2/3. In terms of biological role, catalyzes the conversion of urocanate to 4-imidazolone-5-propionate. In Pseudomonas syringae pv. syringae (strain B728a), this protein is Urocanate hydratase.